A 385-amino-acid chain; its full sequence is Leucine aminopeptidase 1 (385 aa).

The first 20 residues, M1–A20, serve as a signal peptide directing secretion. Residues V21–V87 constitute a propeptide that is removed on maturation. Residue N177 is glycosylated (N-linked (GlcNAc...) asparagine). Residues H185, D204, E243, and D270 each coordinate Zn(2+). A disulfide bridge connects residues C319 and C323. Position 352 (H352) interacts with Zn(2+).

This sequence belongs to the peptidase M28 family. M28E subfamily. As to quaternary structure, monomer. Requires Zn(2+) as cofactor.

Its subcellular location is the secreted. In terms of biological role, extracellular aminopeptidase that allows assimilation of proteinaceous substrates. The polypeptide is Leucine aminopeptidase 1 (LAP1) (Ajellomyces capsulatus (strain NAm1 / WU24) (Darling's disease fungus)).